A 63-amino-acid chain; its full sequence is Potassium channel toxin alpha-KTx 21.1 (63 aa).

A signal peptide spans 1-27 (MQFSGVVLILISMTLVNFVFFETKVEA). Cystine bridges form between Cys33–Cys53, Cys38–Cys58, and Cys42–Cys60.

Belongs to the short scorpion toxin superfamily. Potassium channel inhibitor family. Alpha-KTx 21 subfamily. Expressed by the venom gland.

The protein localises to the secreted. In terms of biological role, reversibly and voltage-independently blocks voltage-gated potassium channels rKv1.2/KCNA2 (73%) (IC(50)=196 nM), hKv1.3/KCNA3 (50%) (IC(50)=508 nM), Shaker IR (30%), rKv1.6/KCNA6 (22%) (at 0.5 uM). Interaction of Ts15 with Kv1.3/KCNA3 is stronger than its interaction with Kv1.2/KCNA2. In Tityus serrulatus (Brazilian scorpion), this protein is Potassium channel toxin alpha-KTx 21.1.